Reading from the N-terminus, the 185-residue chain is Elongation factor P (185 aa).

This sequence belongs to the elongation factor P family.

The protein localises to the cytoplasm. It functions in the pathway protein biosynthesis; polypeptide chain elongation. Involved in peptide bond synthesis. Stimulates efficient translation and peptide-bond synthesis on native or reconstituted 70S ribosomes in vitro. Probably functions indirectly by altering the affinity of the ribosome for aminoacyl-tRNA, thus increasing their reactivity as acceptors for peptidyl transferase. This Clostridium novyi (strain NT) protein is Elongation factor P.